Reading from the N-terminus, the 323-residue chain is MNAITLVHSGHVPVMLHEVLEALSPRAGGRYLDGTFGGGGYARAILNAADCTLDAIDRDPAAIERGNAMAVQANGRLRMHQGTFGDMEALAGAEGPFDGIVLDLGVSSFQIDQAERGFSFRNDGPLDMRMGSDGPSAADLVNTCKEAELADILYRYGEEKLSRRIARAIVAARAEAPITTTGQLAHIIRCCVPRDRANIDPATRSFQGLRIAVNDELGELERALEAAPRLLAPGGIFVVVTFHSLEDRLAKRAMAVLAGRTGNPSRYEPAPLRQEAPAFSLLYSRPLSATDEESRENPRARSARLRALVCNPAPKMPVSGMPS.

Residues 39 to 41, Asp57, Phe84, Asp103, and Gln110 each bind S-adenosyl-L-methionine; that span reads GGY.

The protein belongs to the methyltransferase superfamily. RsmH family.

It localises to the cytoplasm. It carries out the reaction cytidine(1402) in 16S rRNA + S-adenosyl-L-methionine = N(4)-methylcytidine(1402) in 16S rRNA + S-adenosyl-L-homocysteine + H(+). Its function is as follows. Specifically methylates the N4 position of cytidine in position 1402 (C1402) of 16S rRNA. The sequence is that of Ribosomal RNA small subunit methyltransferase H from Gluconobacter oxydans (strain 621H) (Gluconobacter suboxydans).